A 100-amino-acid chain; its full sequence is Nucleoid-associated protein HPG27_32 (100 aa).

Belongs to the YbaB/EbfC family. As to quaternary structure, homodimer.

The protein localises to the cytoplasm. Its subcellular location is the nucleoid. Functionally, binds to DNA and alters its conformation. May be involved in regulation of gene expression, nucleoid organization and DNA protection. The sequence is that of Nucleoid-associated protein HPG27_32 from Helicobacter pylori (strain G27).